The sequence spans 329 residues: Ribosomal protein L11 methyltransferase (329 aa).

The S-adenosyl-L-methionine site is built by threonine 177, glycine 198, aspartate 220, and asparagine 264.

This sequence belongs to the methyltransferase superfamily. PrmA family.

The protein resides in the cytoplasm. The enzyme catalyses L-lysyl-[protein] + 3 S-adenosyl-L-methionine = N(6),N(6),N(6)-trimethyl-L-lysyl-[protein] + 3 S-adenosyl-L-homocysteine + 3 H(+). Methylates ribosomal protein L11. The protein is Ribosomal protein L11 methyltransferase of Helicobacter pylori (strain Shi470).